Reading from the N-terminus, the 297-residue chain is Protease HtpX homolog (297 aa).

A run of 2 helical transmembrane segments spans residues 14–34 and 39–59; these read VILL…AGYL and YQLG…SMIF. H143 lines the Zn(2+) pocket. E144 is an active-site residue. Position 147 (H147) interacts with Zn(2+). The next 2 helical transmembrane spans lie at 158 to 178 and 193 to 213; these read IAVA…RMMW and GFGA…PLAA. E225 lines the Zn(2+) pocket.

The protein belongs to the peptidase M48B family. The cofactor is Zn(2+).

The protein localises to the cell membrane. This Streptococcus equi subsp. equi (strain 4047) protein is Protease HtpX homolog.